Here is a 211-residue protein sequence, read N- to C-terminus: MTLQIQFKKYELPPLPYKIDALEPYISKDIIDVHYNGHHKGYVNGANSLLERLEKVVKGDLQTGQYDIQGIIRGLTFNINGHKLHALYWENMAPSGKGGGKPGGALADLINKQYGSFDRFKQVFTETANSLPGTGWAVLYYDTESGNLQIMTFENHFQNHIAEIPIILILDEFEHAYYLQYKNKRADYVNAWWNVVNWDAAEKKLQKYLTK.

Fe cation is bound by residues histidine 34, histidine 85, aspartate 171, and histidine 175.

This sequence belongs to the iron/manganese superoxide dismutase family. Homotetramer. Requires Fe cation as cofactor.

Its subcellular location is the cytoplasm. The catalysed reaction is 2 superoxide + 2 H(+) = H2O2 + O2. Its function is as follows. Destroys superoxide anion radicals which are normally produced within the cells and which are toxic to biological systems. This is Superoxide dismutase [Fe] (sod) from Saccharolobus solfataricus (strain ATCC 35092 / DSM 1617 / JCM 11322 / P2) (Sulfolobus solfataricus).